The chain runs to 245 residues: DNA polymerase sliding clamp 2 (245 aa).

Belongs to the PCNA family. Homotrimer. The subunits circularize to form a toroid; DNA passes through its center. Replication factor C (RFC) is required to load the toroid on the DNA.

In terms of biological role, sliding clamp subunit that acts as a moving platform for DNA processing. Responsible for tethering the catalytic subunit of DNA polymerase and other proteins to DNA during high-speed replication. This is DNA polymerase sliding clamp 2 from Sulfolobus acidocaldarius (strain ATCC 33909 / DSM 639 / JCM 8929 / NBRC 15157 / NCIMB 11770).